Here is a 76-residue protein sequence, read N- to C-terminus: Envelope small membrane protein (76 aa).

Residues 1–16 (MYSFVSEETGTLIVNS) lie on the Virion surface side of the membrane. A helical membrane pass occupies residues 17–37 (VLLFLAFVVFLLVTLAILTAL). Topologically, residues 38–76 (RLCAYCCNIVNVSLVKPTVYVYSRVKNLNSSEGVPDLLV) are intravirion.

Belongs to the betacoronaviruses E protein family. In terms of assembly, homopentamer. Interacts with membrane protein M in the budding compartment of the host cell, which is located between endoplasmic reticulum and the Golgi complex. Interacts with Nucleoprotein.

Its subcellular location is the host Golgi apparatus membrane. Functionally, plays a central role in virus morphogenesis and assembly. Acts as a viroporin and self-assembles in host membranes forming pentameric protein-lipid pores that allow ion transport. Also plays a role in the induction of apoptosis. This chain is Envelope small membrane protein, found in Rhinolophus sinicus (Chinese rufous horseshoe bat).